The following is a 351-amino-acid chain: Short-chain dehydrogenase sdnK (351 aa).

Positions 46, 66, 98, 224, 228, and 268 each coordinate NADP(+). Tyr224 serves as the catalytic Proton donor. Residue Lys228 is the Lowers pKa of active site Tyr of the active site.

Belongs to the short-chain dehydrogenases/reductases (SDR) family.

It participates in antibiotic biosynthesis. Its function is as follows. Short-chain dehydrogenase; part of the gene cluster that mediates the biosynthesis of sordarin and hypoxysordarin, glycoside antibiotics with a unique tetracyclic diterpene aglycone structure. First, the geranylgeranyl diphosphate synthase sdnC constructs GGDP from farnesyl diphosphate and isopentenyl diphosphate. The diterpene cyclase sdnA then catalyzes the cyclization of GGDP to afford cycloaraneosene. Cycloaraneosene is then hydroxylated four times by the putative cytochrome P450 monooxygenases sdnB, sdnE, sdnF and sdnH to give a hydroxylated cycloaraneosene derivative such as cycloaraneosene-8,9,13,19-tetraol. Although the order of the hydroxylations is unclear, at least C8, C9 and C13 of the cycloaraneosene skeleton are hydroxylated before the sordaricin formation. Dehydration of the 13-hydroxy group of the hydroxylated cycloaraneosene derivative might be catalyzed by an unassigned hypothetical protein such as sdnG and sdnP to construct the cyclopentadiene moiety. The FAD-dependent oxidoreductase sdnN is proposed to catalyze the oxidation at C9 of the hydroxylated cycloaraneosene derivative and also catalyze the Baeyer-Villiger oxidation to give the lactone intermediate. The presumed lactone intermediate would be hydrolyzed to give an acrolein moiety and a carboxylate moiety. Then, [4+2]cycloaddition would occur between the acrolein moiety and the cyclopentadiene moiety to give sordaricin. SdnN might also be involved in the [4+2]cycloaddition after the hypothesized oxidation to accommodate the oxidized product and prompt the [4+2]cycloaddition. GDP-6-deoxy-D-altrose may be biosynthesized from GDP-D-mannose by the putative GDP-mannose-4,6-dehydratase sdnI and the short-chain dehydrogenase sdnK. The glycosyltransferase sdnJ catalyzes the attachment of 6-deoxy-D-altrose onto the 19-hydroxy group of sordaricin to give 4'-O-demethylsordarin. The methyltransferase sdnD would complete the biosynthesis of sordarin. Sordarin can be further modified into hypoxysordarin. The unique acyl chain at the 3'-hydroxy group of hypoxysordarin would be constructed by an iterative type I PKS sdnO and the trans-acting polyketide methyltransferase sdnL. SdnL would be responsible for the introduction of an alpha-methyl group of the polyketide chain. Alternatively, the beta-lactamase-like protein sdnR might be responsible for the cleavage and transfer of the polyketide chain from the PKS sdnO to sordarin. Two putative cytochrome P450 monooxygenases, sdnQ and sdnT, might catalyze the epoxidations of the polyketide chain to complete the biosynthesis of hypoxysordarin. Transcriptional regulators sdnM and sdnS are presumably encoded for the transcriptional regulation of the expression of the sdn gene cluster. This chain is Short-chain dehydrogenase sdnK, found in Sordaria araneosa (Pleurage araneosa).